A 202-amino-acid chain; its full sequence is uncharacterized protein (202 aa).

Residues 164–202 form a disordered region; the sequence is DTDSEQESDQESDQDSDQESEESDQESDQDSDQDSEGSE. Residues 165-202 show a composition bias toward acidic residues; that stretch reads TDSEQESDQESDQDSDQESEESDQESDQDSDQDSEGSE.

This is an uncharacterized protein from Acanthamoeba polyphaga mimivirus (APMV).